Consider the following 968-residue polypeptide: Insulin receptor substrate 1 (968 aa).

Residues 8-109 form the PH domain; sequence GMALSGYLKK…WLDKLLVLQR (102 aa). Residues 122-236 form the IRS-type PTB domain; it reads YDHVWQVVIQ…SAMSAKTESN (115 aa). Residues 248-269 form a disordered region; it reads DLSHEPMRKRSSSANEASKPIN. Ser-286 and Ser-287 each carry phosphoserine. Residues 304–329 show a composition bias toward polar residues; sequence RNGTLSESSNQTYFGSNHGLRSNTIS. Residues 304–370 form a disordered region; that stretch reads RNGTLSESSN…VDESDDNGSF (67 aa). Ser-342 carries the phosphoserine modification. Tyr-411 carries the post-translational modification Phosphotyrosine; by INSR. A YXXM motif 1 motif is present at residues 411 to 414; that stretch reads YIPM. Residues 528–555 are disordered; the sequence is TANRSQSSITKEGTSYGSSANRQKKSTS. A compositionally biased stretch (polar residues) spans 529–555; that stretch reads ANRSQSSITKEGTSYGSSANRQKKSTS. Ser-555 carries the post-translational modification Phosphoserine. Positions 641–644 match the YXXM motif 2 motif; sequence YLEM. Residues 697 to 711 are compositionally biased toward basic and acidic residues; sequence EKWREQPSRSEEKKS. A disordered region spans residues 697–739; sequence EKWREQPSRSEEKKSNSPLNDNTFSSKPTNVESTSKSHDVHSA. The segment covering 712–730 has biased composition (polar residues); sequence NSPLNDNTFSSKPTNVEST. Position 911 is a phosphotyrosine; by INSR (Tyr-911). The interval 922–968 is disordered; the sequence is QNPAKYLKRGSRESPPVSACPEDGNTYAKIDFDQSDSSSSSSNIFNT. A phosphoserine mark is found at Ser-932 and Ser-935. Position 948 is a phosphotyrosine; by INSR (Tyr-948). Low complexity predominate over residues 956-968; it reads SDSSSSSSNIFNT.

As to quaternary structure, bindings to phosphatidylinositol 3-kinase and SHP2.

In terms of biological role, activates phosphatidylinositol 3-kinase when bound to the regulatory p85 subunit. May mediate the control of various cellular processes by insulin-like peptides. When phosphorylated by the insulin receptor binds specifically to various cellular proteins containing SH2 domains. Involved in control of cell proliferation, cell size, and body and organ growth throughout development. Also has a role in a signaling pathway controlling the physiological response required to endure periods of low nutrient conditions. Insulin/insulin-like growth factor (IGF) signaling pathway has a role in regulating aging and is necessary in the ovary for vitellogenic maturation. In Drosophila melanogaster (Fruit fly), this protein is Insulin receptor substrate 1 (chico).